Reading from the N-terminus, the 166-residue chain is Ubiquitin-conjugating enzyme E2 13 (166 aa).

In terms of domain architecture, UBC core spans 4 to 164 (QACLLLQKQL…VSRCVRKSQE (161 aa)). Cys-89 (glycyl thioester intermediate) is an active-site residue.

This sequence belongs to the ubiquitin-conjugating enzyme family.

The enzyme catalyses S-ubiquitinyl-[E1 ubiquitin-activating enzyme]-L-cysteine + [E2 ubiquitin-conjugating enzyme]-L-cysteine = [E1 ubiquitin-activating enzyme]-L-cysteine + S-ubiquitinyl-[E2 ubiquitin-conjugating enzyme]-L-cysteine.. The protein operates within protein modification; protein ubiquitination. In terms of biological role, accepts the ubiquitin from the E1 complex and catalyzes its covalent attachment to other proteins. Involved in the formation of multiubiquitin chains. Signal the protein for selective degradation. This is Ubiquitin-conjugating enzyme E2 13 (UBC13) from Arabidopsis thaliana (Mouse-ear cress).